The following is a 618-amino-acid chain: MTAPNRNTLWARALIDELVAAGVDAVVASPGSRSTPLTVAAARTDDLRVFSQLDERSAAYFALGRARRTGKVTPLICTSGTAAANYHPAVMEASEARVPLLALTADRPPELRDSGANQTADQEKLYGDAVRFYKDLPEPAPNDRALRSLRTTVARAVGTAEGADPGPVHLNVPFKKPLEPTRVLDDVPADLDPVAERGRDGPYVDVTPGSPEPGDDALRRLGNELMTTDRGLIVAGPADPPGLDAEAVTALSHATGFPILADPLSGVRFGGHTRVAPVIGAYDAYLSAEVAGEAGDADASDSWNDPEVVLRLGASPTSKRLRKYLAETGADQYQVDPAGRWREAEFAATDLVVAEPSRLCARLSRLVAGGDGDADWRAQWEDADRVAQEIHGRERDGDIPADDEPVEFHEGDALRVVADALPDPATLFVSNSMPVRDLDRFVGPTTTSVTALGNRGVSGIDGIVSSALGAGSATTDDLTLVVGDLALYHDTNGLLALDRCDVDATVVLINNDGGGIFHELPIESFEPEFTESFKTPHGIEFEPMADLHGLAYTRIDARPDSVESAGNVADDLADAYTGARDADGSHLIEVRTDAESSHRTRKRLEAAVDRAVHGDEAE.

Positions aspartate 192–aspartate 215 are disordered.

It belongs to the TPP enzyme family. MenD subfamily. Homodimer. Mg(2+) serves as cofactor. It depends on Mn(2+) as a cofactor. The cofactor is thiamine diphosphate.

The catalysed reaction is isochorismate + 2-oxoglutarate + H(+) = 5-enolpyruvoyl-6-hydroxy-2-succinyl-cyclohex-3-ene-1-carboxylate + CO2. It functions in the pathway quinol/quinone metabolism; 1,4-dihydroxy-2-naphthoate biosynthesis; 1,4-dihydroxy-2-naphthoate from chorismate: step 2/7. The protein operates within quinol/quinone metabolism; menaquinone biosynthesis. Its function is as follows. Catalyzes the thiamine diphosphate-dependent decarboxylation of 2-oxoglutarate and the subsequent addition of the resulting succinic semialdehyde-thiamine pyrophosphate anion to isochorismate to yield 2-succinyl-5-enolpyruvyl-6-hydroxy-3-cyclohexene-1-carboxylate (SEPHCHC). The chain is 2-succinyl-5-enolpyruvyl-6-hydroxy-3-cyclohexene-1-carboxylate synthase from Halorubrum lacusprofundi (strain ATCC 49239 / DSM 5036 / JCM 8891 / ACAM 34).